The chain runs to 1432 residues: MFDTTKLQSSTQDGSTSSVTGEPIFGANDPNSELNPSSSHFNVRAWASNYAKVTLEGGSQFRRMGVCFQNLNAFGFITPADYQKDVANIWLALPGMLIRNRKRVNILHQFDGIIRPGEMCVVLGPPSSGCSTFLKTLSGDRDGFFIGEDSYFNYEGISDKELHTAHRGDAIYTAETDVHFPKLTVSQTLEFAAQARCPREIPQGIPRQQFCKQLKDVVMGMYGISHTADTKVGNDYIRGVSGGERKRVTIAEATLSNAPLQCWDNCTRGLDSANAIGFCKTLRLQSEFFGQSCAVSMYQAPQSAYDLFDKATVLYQGHQIYFGPADEAKAYFERLGFECPSRQTTPDFLTSMTFPEERITRAGFNPPRTPEEFAAAWRSSPEYKALQTDISEYKTKHPIDGPNAGVYRELKKSYQARGQRIKSPYTLTYMQQVQMCMRRAWNRLVSDPGPTIVVTMGNFVLALIMSSLFFNMQPDTDSFYGREVVLFMAVMFNAFASVLEVMTLYAQRPIVEKQARYAFYHPSAEAYSSVLMDLPIKVLACVSFNLVFYFMTNLNRTPGNFFFYLLASFFIVLSMSGIFRFIKIPSAAFSRTVQQAMIPASILMVFLITFAGFMVPINYMLPWCRWINYLNPVAYGFESLMINEYAGREFRCSNYIPFDGTPGDPNVACNVVGAVAGETFVSGDAHISEAYSYDAAHKWRNIGIVIAMTIFNYTMCFITSEYVSAKKSKGEILVFRRGFVPKNTHVNKITDDLEARSLPVTKIVESPEGSKEKVGGELQSGSTSIFHWRNVCYDIKIKGKPRRILDNVDGWVKPGTMTALMGVSGAGKTTLLDCLADRRTGIGIITGEMLVDGKIRDESFQRKTGYAQQQDLHLETATVRESLVFSALLRRPHHIPKAEKLAYVEEVIDLLEMGPYADAVVGVLGEGLNVEQRKRLTIAVELAAKPPLLLFVDEPTSGLDSQTSWAVVNLLEKLSKAGQSILCTLHQPSAMLFQRFDRLLLLADGGKTVYFGDIGENSSTLVEYFERKAKHPCPPNANPAEWMLEAIGAAPGTTSEVDWQHVWRTSPEFDRVQEELSRLREHGSQSNSHDSEKSETKAVTYHGEFAVPLWTQFVVVIERVFQQSWRTPAYIYSRFALCGVVSLFIGLVFLNSPLSVRGLQNQMFAVFQLFAIVGQLVSQQMPQFIIQRSLYEVRERPAKTYSWKVFMVSQILSDIPYYALASVMMWALWYFPIGLYKNAEVAGQETERGALMWLLFLAWLMWVSTFGHFCISFSETAEAGANAANFMYVLVNFFCGALITPNQMPRFWIFLYRASPLSYLVSSMLSAGIANVEVTCAANEYTIIDPPMGQTCYEYLRNEINTIGGYLLDNNATENCKFCKLKYSNVFLSEIEIEYGTRWRNFGIIWVYVIFNISAAITLYWVARMPKGHRKV.

Polar residues predominate over residues 1–20; the sequence is MFDTTKLQSSTQDGSTSSVT. The disordered stretch occupies residues 1–36; the sequence is MFDTTKLQSSTQDGSTSSVTGEPIFGANDPNSELNP. One can recognise an ABC transporter 1 domain in the interval 91-341; that stretch reads LALPGMLIRN…FERLGFECPS (251 aa). Asn265 carries an N-linked (GlcNAc...) asparagine glycan. A run of 6 helical transmembrane segments spans residues 450–470, 484–504, 530–550, 559–579, 597–617, and 702–722; these read PTIV…SLFF, VVLF…VMTL, VLMD…VFYF, GNFF…SGIF, MIPA…MVPI, and IGIV…TSEY. The 244-residue stretch at 786–1029 folds into the ABC transporter 2 domain; sequence FHWRNVCYDI…TLVEYFERKA (244 aa). 822 to 829 lines the ATP pocket; the sequence is GVSGAGKT. Residue Asn1017 is glycosylated (N-linked (GlcNAc...) asparagine). The interval 1076–1095 is disordered; that stretch reads LSRLREHGSQSNSHDSEKSE. A run of 6 helical transmembrane segments spans residues 1135 to 1155, 1166 to 1186, 1215 to 1235, 1251 to 1271, 1279 to 1299, and 1317 to 1337; these read FALC…SPLS, VFQL…QFII, IPYY…PIGL, LMWL…HFCI, AGAN…GALI, and LSYL…VTCA. Residue Asn1371 is glycosylated (N-linked (GlcNAc...) asparagine). A helical transmembrane segment spans residues 1402–1422; the sequence is FGIIWVYVIFNISAAITLYWV.

The protein belongs to the ABC transporter superfamily. ABCG family. PDR (TC 3.A.1.205) subfamily.

It localises to the cell membrane. Its function is as follows. ABC transporter; part of the gene cluster that mediates the biosynthesis of xenovulene A, an unusual meroterpenoid that has potent inhibitory effects on the human gamma-aminobutyrate A (GABAA) benzodiazepine receptor. The protein is ABC transporter asL7 of Sarocladium schorii (Acremonium strictum (strain IMI 501407)).